The sequence spans 329 residues: Malate dehydrogenase (329 aa).

12–18 (GAAGQIG) is a binding site for NAD(+). Substrate contacts are provided by R93 and R99. NAD(+)-binding positions include N106, Q113, and 130–132 (TGN). N132 and R163 together coordinate substrate. H188 functions as the Proton acceptor in the catalytic mechanism.

This sequence belongs to the LDH/MDH superfamily. MDH type 2 family.

The catalysed reaction is (S)-malate + NAD(+) = oxaloacetate + NADH + H(+). Catalyzes the reversible oxidation of malate to oxaloacetate. The chain is Malate dehydrogenase from Mycobacterium leprae (strain TN).